The chain runs to 191 residues: Phospholipase A2-delta (191 aa).

Residues 1–25 form the signal peptide; the sequence is MIRGGALTHVALGLTVFLLLAVVHS. 6 disulfide bridges follow: C29/C56, C33/C62, C38/C115, C49/C69, C68/C93, and C75/C86. Residues Y48, G50, and Y53 each coordinate Ca(2+). H72 is a catalytic residue. D73 serves as a coordination point for Ca(2+). A disordered region spans residues 161-191; that stretch reads KADTKDGLGTNQGPQTKDGSKVSVPMNPSPS.

This sequence belongs to the phospholipase A2 family. The cofactor is Ca(2+). As to expression, specifically expressed in flowers but at a low level. Detected specifically in the pollen.

Its subcellular location is the secreted. It is found in the endoplasmic reticulum. It catalyses the reaction a 1,2-diacyl-sn-glycero-3-phosphocholine + H2O = a 1-acyl-sn-glycero-3-phosphocholine + a fatty acid + H(+). PA2 catalyzes the calcium-dependent hydrolysis of the 2-acyl groups in 3-sn-phosphoglycerides. Releases lysophospholipids (LPLs) and free fatty acids (FFAs) from membrane phospholipids in response to hormones and other external stimuli. Plays a role in pollen development and germination and tube growth. In Arabidopsis thaliana (Mouse-ear cress), this protein is Phospholipase A2-delta (PLA2-DELTA).